The primary structure comprises 324 residues: Aprataxin (324 aa).

Residues 23-72 (SVTLGRGPDTKIKDKKCSREQVELRADCNRGFVTVKQLGVNPTLVDDVVV) enclose the FHA-like domain. The segment at 100–160 (TEDTSRSKPS…QGLKASMQDP (61 aa)) is disordered. The span at 111–125 (RAQQIQSPTKTTADV) shows a compositional bias: polar residues. The HIT domain occupies 150–255 (SQGLKASMQD…ISQDFDSPCL (106 aa)). Interaction with DNA substrate regions lie at residues 175–179 (DKYPK) and 237–238 (SM). The short motif at 240–244 (HVHLH) is the Histidine triad motif element. The active-site Tele-AMP-histidine intermediate is the His-242. The C2H2-type zinc-finger motif lies at 299 to 321 (LRCHVCGKEQTTIPKLKDHLKTH).

The protein resides in the nucleus. It localises to the nucleoplasm. It is found in the nucleolus. It catalyses the reaction a 5'-end adenosine-5'-diphospho-5'-2'-deoxyribonucleoside-DNA + H2O = a 5'-end 5'-phospho-2'-deoxyribonucleoside-DNA + AMP + 2 H(+). It carries out the reaction a 5'-end adenosine-5'-diphospho-5'-ribonucleoside-2'-deoxyribonucleotide-DNA + H2O = a 5'-end 5'-phospho-ribonucleoside-2'-deoxyribonucleotide-DNA + AMP + 2 H(+). The enzyme catalyses a 3'-end 2'-deoxyribonucleotide-3'-diphospho-5'-guanosine-DNA + H2O = a 3'-end 2'-deoxyribonucleotide 3'-phosphate-DNA + GMP + 2 H(+). In terms of biological role, DNA-binding protein involved in single-strand DNA break repair, double-strand DNA break repair and base excision repair. Resolves abortive DNA ligation intermediates formed either at base excision sites, or when DNA ligases attempt to repair non-ligatable breaks induced by reactive oxygen species. Catalyzes the release of adenylate groups covalently linked to 5'-phosphate termini, resulting in the production of 5'-phosphate termini that can be efficiently rejoined. Also able to hydrolyze adenosine 5'-monophosphoramidate (AMP-NH(2)) and diadenosine tetraphosphate (AppppA), but with lower catalytic activity. Likewise, catalyzes the release of 3'-linked guanosine (DNAppG) and inosine (DNAppI) from DNA, but has higher specific activity with 5'-linked adenosine (AppDNA). This is Aprataxin (aptx) from Danio rerio (Zebrafish).